Consider the following 103-residue polypeptide: Sec-independent protein translocase protein TatA (103 aa).

Residues 1-21 (MGNIFSPTHLIVILLIIIVLF) traverse the membrane as a helical segment. Residues 77–103 (KRATTRVKGSSSSRKGKTSVVKKQRVK) form a disordered region. Residues 90–103 (RKGKTSVVKKQRVK) show a composition bias toward basic residues.

This sequence belongs to the TatA/E family. As to quaternary structure, the Tat system comprises two distinct complexes: a TatABC complex, containing multiple copies of TatA, TatB and TatC subunits, and a separate TatA complex, containing only TatA subunits. Substrates initially bind to the TatABC complex, which probably triggers association of the separate TatA complex to form the active translocon.

It is found in the cell inner membrane. In terms of biological role, part of the twin-arginine translocation (Tat) system that transports large folded proteins containing a characteristic twin-arginine motif in their signal peptide across membranes. TatA could form the protein-conducting channel of the Tat system. This chain is Sec-independent protein translocase protein TatA, found in Bartonella henselae (strain ATCC 49882 / DSM 28221 / CCUG 30454 / Houston 1) (Rochalimaea henselae).